The chain runs to 158 residues: Transcription elongation factor GreA (158 aa).

A coiled-coil region spans residues 1 to 67 (MSNNIPLTKE…FIEGRIQELQ (67 aa)).

Belongs to the GreA/GreB family.

Necessary for efficient RNA polymerase transcription elongation past template-encoded arresting sites. The arresting sites in DNA have the property of trapping a certain fraction of elongating RNA polymerases that pass through, resulting in locked ternary complexes. Cleavage of the nascent transcript by cleavage factors such as GreA or GreB allows the resumption of elongation from the new 3'terminus. GreA releases sequences of 2 to 3 nucleotides. The sequence is that of Transcription elongation factor GreA from Trichlorobacter lovleyi (strain ATCC BAA-1151 / DSM 17278 / SZ) (Geobacter lovleyi).